Reading from the N-terminus, the 177-residue chain is Inorganic pyrophosphatase (177 aa).

K29, R43, and Y55 together coordinate substrate. D65, D70, and D102 together coordinate Mg(2+). Y141 serves as a coordination point for substrate.

The protein belongs to the PPase family. In terms of assembly, homohexamer. Mg(2+) is required as a cofactor.

The protein resides in the cytoplasm. It carries out the reaction diphosphate + H2O = 2 phosphate + H(+). Catalyzes the hydrolysis of inorganic pyrophosphate (PPi) forming two phosphate ions. The protein is Inorganic pyrophosphatase of Aquifex pyrophilus.